The following is a 175-amino-acid chain: Translation initiation factor IF-3 (175 aa).

The protein belongs to the IF-3 family. Monomer.

It is found in the cytoplasm. IF-3 binds to the 30S ribosomal subunit and shifts the equilibrium between 70S ribosomes and their 50S and 30S subunits in favor of the free subunits, thus enhancing the availability of 30S subunits on which protein synthesis initiation begins. The protein is Translation initiation factor IF-3 of Staphylococcus saprophyticus subsp. saprophyticus (strain ATCC 15305 / DSM 20229 / NCIMB 8711 / NCTC 7292 / S-41).